The primary structure comprises 275 residues: Ribosomal RNA small subunit methyltransferase A (275 aa).

Asn28, Leu30, Gly55, Glu77, Asp103, and Asn123 together coordinate S-adenosyl-L-methionine.

The protein belongs to the class I-like SAM-binding methyltransferase superfamily. rRNA adenine N(6)-methyltransferase family. RsmA subfamily.

It is found in the cytoplasm. It carries out the reaction adenosine(1518)/adenosine(1519) in 16S rRNA + 4 S-adenosyl-L-methionine = N(6)-dimethyladenosine(1518)/N(6)-dimethyladenosine(1519) in 16S rRNA + 4 S-adenosyl-L-homocysteine + 4 H(+). Functionally, specifically dimethylates two adjacent adenosines (A1518 and A1519) in the loop of a conserved hairpin near the 3'-end of 16S rRNA in the 30S particle. May play a critical role in biogenesis of 30S subunits. This Rhizobium johnstonii (strain DSM 114642 / LMG 32736 / 3841) (Rhizobium leguminosarum bv. viciae) protein is Ribosomal RNA small subunit methyltransferase A.